A 364-amino-acid chain; its full sequence is UDP-3-O-acylglucosamine N-acyltransferase (364 aa).

His-257 serves as the catalytic Proton acceptor.

Belongs to the transferase hexapeptide repeat family. LpxD subfamily. Homotrimer.

It carries out the reaction a UDP-3-O-[(3R)-3-hydroxyacyl]-alpha-D-glucosamine + a (3R)-hydroxyacyl-[ACP] = a UDP-2-N,3-O-bis[(3R)-3-hydroxyacyl]-alpha-D-glucosamine + holo-[ACP] + H(+). It functions in the pathway bacterial outer membrane biogenesis; LPS lipid A biosynthesis. Catalyzes the N-acylation of UDP-3-O-acylglucosamine using 3-hydroxyacyl-ACP as the acyl donor. Is involved in the biosynthesis of lipid A, a phosphorylated glycolipid that anchors the lipopolysaccharide to the outer membrane of the cell. The protein is UDP-3-O-acylglucosamine N-acyltransferase of Paracoccus denitrificans (strain Pd 1222).